The sequence spans 274 residues: tRNA pseudouridine synthase A (274 aa).

Asp54 functions as the Nucleophile in the catalytic mechanism. Tyr112 provides a ligand contact to substrate.

Belongs to the tRNA pseudouridine synthase TruA family. Homodimer.

It catalyses the reaction uridine(38/39/40) in tRNA = pseudouridine(38/39/40) in tRNA. In terms of biological role, formation of pseudouridine at positions 38, 39 and 40 in the anticodon stem and loop of transfer RNAs. This is tRNA pseudouridine synthase A from Solidesulfovibrio magneticus (strain ATCC 700980 / DSM 13731 / RS-1) (Desulfovibrio magneticus).